Reading from the N-terminus, the 367-residue chain is Peptide chain release factor 2 (367 aa).

At glutamine 254 the chain carries N5-methylglutamine.

This sequence belongs to the prokaryotic/mitochondrial release factor family. Methylated by PrmC. Methylation increases the termination efficiency of RF2.

Its subcellular location is the cytoplasm. In terms of biological role, peptide chain release factor 2 directs the termination of translation in response to the peptide chain termination codons UGA and UAA. In Neisseria meningitidis serogroup A / serotype 4A (strain DSM 15465 / Z2491), this protein is Peptide chain release factor 2.